Consider the following 61-residue polypeptide: MAKKAMIERWKKPKKYKVREYTRCHICGRPRAVYREFGLCRVCFRKLALEGKLPGVRKASW.

Positions 24, 27, 40, and 43 each coordinate Zn(2+).

Belongs to the universal ribosomal protein uS14 family. Zinc-binding uS14 subfamily. As to quaternary structure, part of the 30S ribosomal subunit. Contacts proteins S3 and S10. It depends on Zn(2+) as a cofactor.

Functionally, binds 16S rRNA, required for the assembly of 30S particles and may also be responsible for determining the conformation of the 16S rRNA at the A site. This chain is Small ribosomal subunit protein uS14, found in Thermotoga neapolitana (strain ATCC 49049 / DSM 4359 / NBRC 107923 / NS-E).